Here is a 395-residue protein sequence, read N- to C-terminus: uncharacterized protein (395 aa).

Belongs to the UDP-glycosyltransferase family.

This is an uncharacterized protein from Bacillus subtilis (strain 168).